A 214-amino-acid polypeptide reads, in one-letter code: Adenylate kinase (214 aa).

10 to 15 (GAGKGT) serves as a coordination point for ATP. The segment at 30 to 59 (STGDMLRAAVKAGTPLGLEAKKVMDAGQLV) is NMP. Residues Thr-31, Arg-36, 57 to 59 (QLV), 85 to 88 (GFPR), and Gln-92 contribute to the AMP site. The LID stretch occupies residues 122 to 159 (GRRVHSGSGRVYHVVFNPPKVEGKDDVTGEDLSIRPDD). Residues Arg-123 and 132–133 (VY) contribute to the ATP site. 2 residues coordinate AMP: Arg-156 and Arg-167. Gln-200 serves as a coordination point for ATP.

Belongs to the adenylate kinase family. Monomer.

It is found in the cytoplasm. It carries out the reaction AMP + ATP = 2 ADP. It functions in the pathway purine metabolism; AMP biosynthesis via salvage pathway; AMP from ADP: step 1/1. In terms of biological role, catalyzes the reversible transfer of the terminal phosphate group between ATP and AMP. Plays an important role in cellular energy homeostasis and in adenine nucleotide metabolism. The sequence is that of Adenylate kinase from Shewanella denitrificans (strain OS217 / ATCC BAA-1090 / DSM 15013).